We begin with the raw amino-acid sequence, 71 residues long: Small ribosomal subunit protein bS21 (71 aa).

It belongs to the bacterial ribosomal protein bS21 family.

The sequence is that of Small ribosomal subunit protein bS21 from Buchnera aphidicola subsp. Acyrthosiphon pisum (strain 5A).